A 3374-amino-acid polypeptide reads, in one-letter code: Abnormal spindle-like microcephaly-associated protein homolog (3374 aa).

Ser212, Ser215, Ser300, and Ser325 each carry phosphoserine. Residues 492-518 (SSKNIVTPPCKAASVARKRKSKGHTGD) form a disordered region. The residue at position 540 (Ser540) is a Phosphoserine. Positions 855–991 (KASXDILLAF…LLWKIALAFQ (137 aa)) constitute a Calponin-homology (CH) 1 domain. Positions 992-1013 (VDISLNLDQLKEEIDFLKKTQS) form a coiled coil. At Ser1038 the chain carries Phosphoserine. The region spanning 1045–1196 (SESVKLLMDW…YLSFLCARLL (152 aa)) is the Calponin-homology (CH) 2 domain. IQ domains are found at residues 1201–1230 (ETRA…RDKA), 1282–1313 (HSKS…IILQ), 1472–1503 (KRAA…VLQS), 1567–1596 (TRSA…AVVK), 1590–1619 (ILTA…ATVK), 1613–1642 (LKKA…IAQQ), 1647–1678 (LRAS…VLLQ), 1720–1749 (VRRA…AALK), 1743–1772 (QSAA…SALK), 1793–1822 (TRTA…AAVK), 1816–1847 (EHEA…SVIQ), 1866–1897 (LRRA…IIIQ), 1939–1968 (TKGA…AATT), 1962–1993 (MHQA…VIIQ), 2012–2043 (VKKA…TLIK), 2035–2066 (MHMA…IVIQ), 2085–2116 (TLKA…TLIQ), 2108–2137 (MRTA…VTKT), 2158–2189 (LRRS…AVIQ), 2181–2212 (MHSA…VWVQ), 2230–2261 (LQKA…TVLQ), 2253–2284 (MRRA…QVIQ), 2303–2334 (QXRS…TLIQ), 2326–2357 (MHAS…VFVQ), 2376–2407 (LKKA…ALIQ), 2399–2430 (MHRA…VLIQ), 2449–2480 (WRHS…VIIQ), 2472–2503 (KHRA…KVIQ), 2542–2573 (QHQA…VFVQ), 2583–2612 (RTQA…AATR), 2606–2637 (MHLA…VVIQ), 2656–2685 (IQKS…EKMA), 2732–2763 (QRKA…QIQS), 2777–2806 (QKRA…AAVG), 2827–2856 (IRSS…STIK), 2850–2881 (LKDS…RIQA), 2872–2903 (EVKA…RIIQ), 2947–2976 (RHQA…AALT), 2997–3028 (LKKS…RLLH), 3099–3128 (HSRA…RIAK), and 3122–3153 (LNKR…IRQR).

It localises to the cytoplasm. It is found in the cytoskeleton. The protein resides in the spindle. Its subcellular location is the nucleus. Probable role in mitotic spindle regulation and coordination of mitotic processes. May have a preferential role in regulating neurogenesis. The chain is Abnormal spindle-like microcephaly-associated protein homolog (ASPM) from Ovis aries (Sheep).